Reading from the N-terminus, the 406-residue chain is 26S proteasome regulatory subunit 8 (406 aa).

An N-acetylalanine modification is found at A2. Phosphoserine is present on S120. Positions V186 to K406 are may mediate interaction with PRPF9. G190–T197 lines the ATP pocket. Residue K222 is modified to N6-acetyllysine.

The protein belongs to the AAA ATPase family. In terms of assembly, component of the 19S proteasome regulatory particle complex. The 26S proteasome consists of a 20S core particle (CP) and two 19S regulatory subunits (RP). The regulatory particle is made of a lid composed of 9 subunits, a base containing 6 ATPases including PSMC5 and few additional components. Component of a complex with USP49 and RUVBL1. Interacts with PRPF19. Interacts with TRIM5. Interacts with NDC80. Interacts with PAAF1. Interacts, in vitro, with the thyroid hormone receptor (in a thyroid hormone T3-dependent manner) and with retinoid X receptor (RXR). Interacts with ERCC6.

It localises to the cytoplasm. The protein resides in the nucleus. In terms of biological role, component of the 26S proteasome, a multiprotein complex involved in the ATP-dependent degradation of ubiquitinated proteins. This complex plays a key role in the maintenance of protein homeostasis by removing misfolded or damaged proteins, which could impair cellular functions, and by removing proteins whose functions are no longer required. Therefore, the proteasome participates in numerous cellular processes, including cell cycle progression, apoptosis, or DNA damage repair. PSMC5 belongs to the heterohexameric ring of AAA (ATPases associated with diverse cellular activities) proteins that unfolds ubiquitinated target proteins that are concurrently translocated into a proteolytic chamber and degraded into peptides. In Bos taurus (Bovine), this protein is 26S proteasome regulatory subunit 8 (PSMC5).